The primary structure comprises 178 residues: Caveolin-1 (178 aa).

Ser-2 is modified (N-acetylserine). Phosphoserine is present on Ser-2. The interval 2–94 is required for homooligomerization; the sequence is SGGKYVDSEG…WKASFTTFTV (93 aa). The Cytoplasmic segment spans residues 2–104; it reads SGGKYVDSEG…TKYWFYRLLS (103 aa). At Lys-5 the chain carries N6-acetyllysine; alternate. A Glycyl lysine isopeptide (Lys-Gly) (interchain with G-Cter in ubiquitin); alternate cross-link involves residue Lys-5. Phosphotyrosine is present on Tyr-6. Ser-9 carries the phosphoserine modification. Tyr-14 is modified (phosphotyrosine; by ABL1). Residue Tyr-25 is modified to Phosphotyrosine. Glycyl lysine isopeptide (Lys-Gly) (interchain with G-Cter in ubiquitin) cross-links involve residues Lys-26, Lys-30, Lys-39, Lys-47, and Lys-57. The interaction with CAVIN3 stretch occupies residues 82 to 94; it reads DGIWKASFTTFTV. Positions 105–125 form an intramembrane region, helical; that stretch reads GIFGIPMALIWGVYFAILSFL. Topologically, residues 126–178 are cytoplasmic; that stretch reads HIWAVVPCIKSFLIEIQCISRVYSIYVHTFCDPLFEAIGKIFSNIRISTQKEI. The interacts with SPRY1, SPRY2, SPRY3 and SPRY4 stretch occupies residues 131–142; that stretch reads VPCIKSFLIEIQ. 3 S-palmitoyl cysteine lipidation sites follow: Cys-133, Cys-143, and Cys-156. An interacts with SPRY1, SPRY2, and SPRY4 region spans residues 149–160; sequence SIYVHTFCDPLF. Residues 167–178 form an interacts with SPRY1, SPRY2, SPRY3 and SPRY4 region; that stretch reads FSNIRISTQKEI.

The protein belongs to the caveolin family. Homooligomer. Interacts with GLIPR2. Interacts with NOSTRIN. Interacts with SNAP25 and STX1A. Interacts (via the N-terminus) with DPP4; the interaction is direct. Interacts with CTNNB1, CDH1 and JUP. Interacts with PACSIN2; this interaction induces membrane tubulation. Interacts with SLC7A9. Interacts with BMX and BTK. Interacts with TGFBR1. Interacts with CAVIN3 (via leucine-zipper domain) in a cholesterol-sensitive manner. Interacts with CAVIN1. Interacts with EHD2 in a cholesterol-dependent manner. Forms a ternary complex with UBXN6 and VCP; mediates CAV1 targeting to lysosomes for degradation. Interacts with ABCG1; this interaction regulates ABCG1-mediated cholesterol efflux. Interacts with NEU3; this interaction enhances NEU3 sialidase activity within caveola. Interacts (via C-terminus) with SPRY1, SPRY2 (via C-terminus), SPRY3, and SPRY4. Interacts with IGFBP5; this interaction allows trafficking of IGFBP5 from the plasma membrane to the nucleus. Phosphorylated at Tyr-14 by ABL1 in response to oxidative stress. Post-translationally, ubiquitinated. Undergo monoubiquitination and multi- and/or polyubiquitination. Monoubiquitination of N-terminal lysines promotes integration in a ternary complex with UBXN6 and VCP which promotes oligomeric CAV1 targeting to lysosomes for degradation. Ubiquitinated by ZNRF1; leading to degradation and modulation of the TLR4-mediated immune response.

It is found in the golgi apparatus membrane. The protein localises to the cell membrane. Its subcellular location is the membrane. The protein resides in the caveola. It localises to the membrane raft. Its function is as follows. May act as a scaffolding protein within caveolar membranes. Forms a stable heterooligomeric complex with CAV2 that targets to lipid rafts and drives caveolae formation. Mediates the recruitment of CAVIN proteins (CAVIN1/2/3/4) to the caveolae. Interacts directly with G-protein alpha subunits and can functionally regulate their activity. Involved in the costimulatory signal essential for T-cell receptor (TCR)-mediated T-cell activation. Its binding to DPP4 induces T-cell proliferation and NF-kappa-B activation in a T-cell receptor/CD3-dependent manner. Recruits CTNNB1 to caveolar membranes and may regulate CTNNB1-mediated signaling through the Wnt pathway. Negatively regulates TGFB1-mediated activation of SMAD2/3 by mediating the internalization of TGFBR1 from membrane rafts leading to its subsequent degradation. Binds 20(S)-hydroxycholesterol (20(S)-OHC). In Echinops telfairi (Lesser hedgehog tenrec), this protein is Caveolin-1 (CAV1).